Here is a 195-residue protein sequence, read N- to C-terminus: tRNA (pseudouridine(54)-N(1))-methyltransferase (195 aa).

Residue Leu129 coordinates S-adenosyl-L-methionine.

The protein belongs to the methyltransferase superfamily. TrmY family. As to quaternary structure, homodimer.

The protein localises to the cytoplasm. It catalyses the reaction pseudouridine(54) in tRNA + S-adenosyl-L-methionine = N(1)-methylpseudouridine(54) in tRNA + S-adenosyl-L-homocysteine + H(+). Specifically catalyzes the N1-methylation of pseudouridine at position 54 (Psi54) in tRNAs. This is tRNA (pseudouridine(54)-N(1))-methyltransferase from Methanocorpusculum labreanum (strain ATCC 43576 / DSM 4855 / Z).